Consider the following 393-residue polypeptide: S-adenosylmethionine synthase 2 (393 aa).

Glutamate 9 serves as a coordination point for Mg(2+). Histidine 15 lines the ATP pocket. Glutamate 43 is a K(+) binding site. Residues glutamate 56 and glutamine 99 each contribute to the L-methionine site. Residues aspartate 167 to lysine 169, serine 235 to phenylalanine 238, aspartate 246, arginine 252 to methionine 253, alanine 269, lysine 273, and lysine 277 each bind ATP. Aspartate 246 provides a ligand contact to L-methionine. Lysine 277 serves as a coordination point for L-methionine.

This sequence belongs to the AdoMet synthase family. Homotetramer. Mn(2+) serves as cofactor. The cofactor is Mg(2+). It depends on Co(2+) as a cofactor. K(+) is required as a cofactor.

It is found in the cytoplasm. It catalyses the reaction L-methionine + ATP + H2O = S-adenosyl-L-methionine + phosphate + diphosphate. It functions in the pathway amino-acid biosynthesis; S-adenosyl-L-methionine biosynthesis; S-adenosyl-L-methionine from L-methionine: step 1/1. Its function is as follows. Catalyzes the formation of S-adenosylmethionine from methionine and ATP. The reaction comprises two steps that are both catalyzed by the same enzyme: formation of S-adenosylmethionine (AdoMet) and triphosphate, and subsequent hydrolysis of the triphosphate. This is S-adenosylmethionine synthase 2 (SAMS2) from Daucus carota (Wild carrot).